The following is a 167-amino-acid chain: Ubiquitin-conjugating enzyme E2 15 (167 aa).

The region spanning 5–165 (ASEQLLRKQL…VRRLVRRSIE (161 aa)) is the UBC core domain. Catalysis depends on Cys90, which acts as the Glycyl thioester intermediate.

Belongs to the ubiquitin-conjugating enzyme family.

It carries out the reaction S-ubiquitinyl-[E1 ubiquitin-activating enzyme]-L-cysteine + [E2 ubiquitin-conjugating enzyme]-L-cysteine = [E1 ubiquitin-activating enzyme]-L-cysteine + S-ubiquitinyl-[E2 ubiquitin-conjugating enzyme]-L-cysteine.. Its pathway is protein modification; protein ubiquitination. Catalyzes the covalent attachment of ubiquitin to other proteins. Has a role in the formation of chromatin structures that influence the localization of transcriptional silencing factors. The chain is Ubiquitin-conjugating enzyme E2 15 (ubc15) from Schizosaccharomyces pombe (strain 972 / ATCC 24843) (Fission yeast).